The following is a 354-amino-acid chain: Bergaptol O-methyltransferase (354 aa).

His121 contributes to the bergaptol binding site. S-adenosyl-L-homocysteine contacts are provided by Ser174, Gly198, Asp221, and Lys255. His259 contributes to the bergaptol binding site. His259 serves as the catalytic Proton acceptor.

The protein belongs to the class I-like SAM-binding methyltransferase superfamily. Cation-independent O-methyltransferase family. COMT subfamily.

The enzyme catalyses a 5-hydroxyfurocoumarin + S-adenosyl-L-methionine = a 5-methoxyfurocoumarin + S-adenosyl-L-homocysteine + H(+). The catalysed reaction is bergaptol + S-adenosyl-L-methionine = bergapten + S-adenosyl-L-homocysteine. Its activity is regulated as follows. Inhibited by Cu(2+), Ni(2+) and Co(2+). In Ammi majus (Bishop's weed), this protein is Bergaptol O-methyltransferase.